The primary structure comprises 206 residues: Regulator of rDNA transcription 14 (206 aa).

The disordered stretch occupies residues 178 to 206 (FVKDHRYPGLTPGLAPVGLSDEEDSSEED). Phosphoserine is present on residues S197, S202, and S203. Residues 197 to 206 (SDEEDSSEED) show a composition bias toward acidic residues.

The protein belongs to the RRT14 family.

The protein localises to the nucleus. It is found in the nucleolus. Functionally, involved in ribosome biogenesis, probably through modulation of rDNA transcription. The protein is Regulator of rDNA transcription 14 (RRT14) of Saccharomyces cerevisiae (strain JAY291) (Baker's yeast).